Reading from the N-terminus, the 167-residue chain is NAD(P)H-quinone oxidoreductase subunit I, chloroplastic (167 aa).

2 4Fe-4S ferredoxin-type domains span residues 55-84 (GRIH…VDWI) and 95-124 (KNYS…MTEE). [4Fe-4S] cluster is bound by residues Cys-64, Cys-67, Cys-70, Cys-74, Cys-104, Cys-107, Cys-110, and Cys-114.

The protein belongs to the complex I 23 kDa subunit family. As to quaternary structure, NDH is composed of at least 16 different subunits, 5 of which are encoded in the nucleus. [4Fe-4S] cluster is required as a cofactor.

It localises to the plastid. Its subcellular location is the chloroplast thylakoid membrane. It catalyses the reaction a plastoquinone + NADH + (n+1) H(+)(in) = a plastoquinol + NAD(+) + n H(+)(out). The enzyme catalyses a plastoquinone + NADPH + (n+1) H(+)(in) = a plastoquinol + NADP(+) + n H(+)(out). Its function is as follows. NDH shuttles electrons from NAD(P)H:plastoquinone, via FMN and iron-sulfur (Fe-S) centers, to quinones in the photosynthetic chain and possibly in a chloroplast respiratory chain. The immediate electron acceptor for the enzyme in this species is believed to be plastoquinone. Couples the redox reaction to proton translocation, and thus conserves the redox energy in a proton gradient. The polypeptide is NAD(P)H-quinone oxidoreductase subunit I, chloroplastic (Adiantum capillus-veneris (Maidenhair fern)).